The primary structure comprises 268 residues: Octanoyltransferase (268 aa).

Positions 47–243 constitute a BPL/LPL catalytic domain; sequence PETPDQVWLV…ALCEVLAAHE (197 aa). Residues 87 to 94, 159 to 161, and 172 to 174 each bind substrate; these read RGGQITYH, ALG, and GVS. Cys190 functions as the Acyl-thioester intermediate in the catalytic mechanism.

The protein belongs to the LipB family.

The protein resides in the cytoplasm. It catalyses the reaction octanoyl-[ACP] + L-lysyl-[protein] = N(6)-octanoyl-L-lysyl-[protein] + holo-[ACP] + H(+). It functions in the pathway protein modification; protein lipoylation via endogenous pathway; protein N(6)-(lipoyl)lysine from octanoyl-[acyl-carrier-protein]: step 1/2. In terms of biological role, catalyzes the transfer of endogenously produced octanoic acid from octanoyl-acyl-carrier-protein onto the lipoyl domains of lipoate-dependent enzymes. Lipoyl-ACP can also act as a substrate although octanoyl-ACP is likely to be the physiological substrate. This is Octanoyltransferase from Cupriavidus necator (strain ATCC 17699 / DSM 428 / KCTC 22496 / NCIMB 10442 / H16 / Stanier 337) (Ralstonia eutropha).